The chain runs to 98 residues: Integration host factor subunit alpha (98 aa).

Positions 49-70 (FGNFDLRDKNQRPGRNPKTGED) are disordered.

It belongs to the bacterial histone-like protein family. Heterodimer of an alpha and a beta chain.

Its function is as follows. This protein is one of the two subunits of integration host factor, a specific DNA-binding protein that functions in genetic recombination as well as in transcriptional and translational control. This chain is Integration host factor subunit alpha, found in Sodalis glossinidius (strain morsitans).